We begin with the raw amino-acid sequence, 342 residues long: Polygalacturonase inhibitor 2 (342 aa).

An N-terminal signal peptide occupies residues 1–29 (MTQFNIPVTMSSSLSIILVILVSLSTAHS). 2 disulfide bridges follow: C32–C62 and C63–C72. A glycan (N-linked (GlcNAc...) (complex) asparagine) is linked at N64. LRR repeat units follow at residues 82-107 (NNLD…LPYL), 108-132 (NFLY…LTQL), 133-156 (HYLY…IKTL), 157-180 (VTLD…LPNL), 181-205 (VGIT…SKLF), 206-228 (TSMT…NLNL), 229-252 (AFVD…DKNT), 253-275 (QKIH…SKNL), 276-299 (NGLD…LKFL), and 300-319 (HSLN…GGNL). A glycan (N-linked (GlcNAc...) (complex) asparagine) is linked at N141. N303 carries an N-linked (GlcNAc...) asparagine glycan. Intrachain disulfides connect C310-C332 and C334-C341.

Belongs to the polygalacturonase-inhibiting protein family. In terms of processing, asn-303 is not glycosylated.

It localises to the secreted. The protein localises to the cell wall. The protein resides in the membrane. In terms of biological role, inhibitor of fungal polygalacturonase. It is an important factor for plant resistance to phytopathogenic fungi. Inhibits all polygalacturonases (PG) tested, with the exception of PG from F.oxysporum which was only inhibited at 60%. This is Polygalacturonase inhibitor 2 (PGIP2) from Phaseolus vulgaris (Kidney bean).